A 471-amino-acid polypeptide reads, in one-letter code: Putative metabolite transport protein YncC (471 aa).

12 helical membrane-spanning segments follow: residues 13-33 (LIMISATFGGLLFGYDTGVIN), 50-70 (VTEGLVTSILLLGAAFGALLC), 88-108 (FLFFLASLGTALAPNVFIMAV), 111-131 (FLLGLAVGGASAMVPAFLAEM), 146-166 (LMIVGGQFLAYVFNAILGVTM), 175-195 (YMLVICAVPAIMLFASMLKVP), 256-276 (LLWIGIGVAIVNQITGVNSIM), 295-315 (IANIGNGLISVIAVIFGIWLV), 323-343 (ILLIGLAGTTTALLLIAIFSI), 358-378 (LTVLFLAFMQGCVGPVTWLVI), 393-413 (ISVFFLWILNFVIGFAFPILL), and 416-436 (VGLSFTFFIFVALGVLAIGFV).

Belongs to the major facilitator superfamily. Sugar transporter (TC 2.A.1.1) family.

The protein localises to the cell membrane. In Bacillus subtilis (strain 168), this protein is Putative metabolite transport protein YncC (yncC).